A 663-amino-acid chain; its full sequence is UvrABC system protein B (663 aa).

Residues 26–183 (DGLESGLAKQ…KRLAEMQYTR (158 aa)) enclose the Helicase ATP-binding domain. Residue 39–46 (GVTGSGKT) coordinates ATP. The Beta-hairpin motif lies at 92–115 (YYDYYQPEAYVPASDTFIEKDASI). The region spanning 430–596 (QVDDLMSEIR…GINKSVEDIL (167 aa)) is the Helicase C-terminal domain. The UVR domain occupies 624–659 (AKQINALEKQMYAHAQNMEFELAAKIRDEYLLLKEQ).

It belongs to the UvrB family. In terms of assembly, forms a heterotetramer with UvrA during the search for lesions. Interacts with UvrC in an incision complex.

It localises to the cytoplasm. Functionally, the UvrABC repair system catalyzes the recognition and processing of DNA lesions. A damage recognition complex composed of 2 UvrA and 2 UvrB subunits scans DNA for abnormalities. Upon binding of the UvrA(2)B(2) complex to a putative damaged site, the DNA wraps around one UvrB monomer. DNA wrap is dependent on ATP binding by UvrB and probably causes local melting of the DNA helix, facilitating insertion of UvrB beta-hairpin between the DNA strands. Then UvrB probes one DNA strand for the presence of a lesion. If a lesion is found the UvrA subunits dissociate and the UvrB-DNA preincision complex is formed. This complex is subsequently bound by UvrC and the second UvrB is released. If no lesion is found, the DNA wraps around the other UvrB subunit that will check the other stand for damage. The polypeptide is UvrABC system protein B (Legionella pneumophila (strain Corby)).